The primary structure comprises 64 residues: Small ribosomal subunit protein eS17 (64 aa).

The protein belongs to the eukaryotic ribosomal protein eS17 family.

This is Small ribosomal subunit protein eS17 from Natronomonas pharaonis (strain ATCC 35678 / DSM 2160 / CIP 103997 / JCM 8858 / NBRC 14720 / NCIMB 2260 / Gabara) (Halobacterium pharaonis).